Here is a 269-residue protein sequence, read N- to C-terminus: Glutamate racemase (269 aa).

Residues 13–14 (DS) and 45–46 (YS) each bind substrate. Catalysis depends on C77, which acts as the Proton donor/acceptor. Position 78–79 (78–79 (NT)) interacts with substrate. Residue C188 is the Proton donor/acceptor of the active site. 189–190 (TH) contacts substrate.

This sequence belongs to the aspartate/glutamate racemases family.

It catalyses the reaction L-glutamate = D-glutamate. The protein operates within cell wall biogenesis; peptidoglycan biosynthesis. Provides the (R)-glutamate required for cell wall biosynthesis. This Pasteurella multocida (strain Pm70) protein is Glutamate racemase.